A 47-amino-acid chain; its full sequence is Defensin-like protein 1 (47 aa).

Cystine bridges form between Cys5–Cys47, Cys16–Cys36, Cys22–Cys43, and Cys26–Cys45.

It belongs to the DEFL family.

Its function is as follows. Fabatins have antibacterial activity against Gram-positive and Gram-negative bacteria. High activity against P.aeruginosa. No activity against S.cerevisiae and C.albicans. The protein is Defensin-like protein 1 of Vicia faba (Broad bean).